A 321-amino-acid chain; its full sequence is MAPETKNDFLEIADSDADSDIGYNSEEDDMQKGGRGAKRRKVESDDEDDPGSDIGSDDEDEATEKDSKKTQEEDKKEDQPEKPKRKSKDTTSTELPDVTRTLTKKNLVASEAAIKKSGVVYLSRIPPFMKPAKLRSLLEPYGTINRIFLAPEDPASHARRVRAGGNKKRSYTEGWVEFTKKKDAKAVCDLLNARTIGGKKGSYYHDDLWNLLYLKGFKWHNLTEQIAAENAERSSRMRAEISKSTKENKEFVRNVEKAKMLDGMAVKAKAKKRKAETHTEGQEDESVRQVKRSFKQVPLAKKKMDGEDQPAEVTRVLSKIF.

The segment at 1-98 (MAPETKNDFL…DTTSTELPDV (98 aa)) is disordered. Acidic residues-rich tracts occupy residues 11–29 (EIADSDADSDIGYNSEEDD) and 44–63 (SDDEDDPGSDIGSDDEDEAT). A compositionally biased stretch (basic and acidic residues) spans 64–82 (EKDSKKTQEEDKKEDQPEK). Residues 118–208 (GVVYLSRIPP…KKGSYYHDDL (91 aa)) enclose the RRM domain. The segment at 266 to 291 (VKAKAKKRKAETHTEGQEDESVRQVK) is disordered. The span at 276-288 (ETHTEGQEDESVR) shows a compositional bias: basic and acidic residues.

Belongs to the ESF2/ABP1 family.

It localises to the nucleus. Its subcellular location is the nucleolus. Its function is as follows. Involved in the small subunit (SSU) processome assembly and function, and in the 18S rRNA synthesis. Required for the early cleavages at sites A0, A1 and A2. The chain is Pre-rRNA-processing protein ESF2 (ESF2) from Gibberella zeae (strain ATCC MYA-4620 / CBS 123657 / FGSC 9075 / NRRL 31084 / PH-1) (Wheat head blight fungus).